The chain runs to 493 residues: Acetylcholine receptor subunit beta (493 aa).

A signal peptide spans 1-24 (MENVRRMALGLVVMMALALSGVGA). Residues 25–240 (SVMEDTLLSV…VTFYLIIQRK (216 aa)) are Extracellular-facing. A disulfide bridge links Cys-152 with Cys-166. Asn-165 carries N-linked (GlcNAc...) asparagine glycosylation. A run of 3 helical transmembrane segments spans residues 241–265 (PLFYIVYTIIPCILISILAILVFYL), 273–291 (MSLSISALLAVTVFLLLLA), and 307–328 (YLMFIMILVAFSVILSVVVLNL). The Cytoplasmic segment spans residues 329–461 (HHRSPNTHTM…WQYVAMVADR (133 aa)). A Phosphotyrosine; by Tyr-kinases modification is found at Tyr-379. The chain crosses the membrane as a helical span at residues 462–480 (LFLYVFFVICSIGTFSIFL).

It belongs to the ligand-gated ion channel (TC 1.A.9) family. Acetylcholine receptor (TC 1.A.9.1) subfamily. Beta-1/CHRNB1 sub-subfamily. In terms of assembly, pentamer of two alpha chains, and one each of the beta, delta, and gamma chains.

It localises to the postsynaptic cell membrane. It is found in the cell membrane. It carries out the reaction K(+)(in) = K(+)(out). It catalyses the reaction Na(+)(in) = Na(+)(out). In terms of biological role, after binding acetylcholine, the AChR responds by an extensive change in conformation that affects all subunits and leads to opening of an ion-conducting channel across the plasma membrane. The chain is Acetylcholine receptor subunit beta (CHRNB1) from Tetronarce californica (Pacific electric ray).